A 207-amino-acid chain; its full sequence is uncharacterized protein (207 aa).

The S-adenosyl-L-methionine site is built by Gly51 and Asp72.

This sequence belongs to the methyltransferase superfamily. YrrT family.

Its function is as follows. Could be a S-adenosyl-L-methionine-dependent methyltransferase. This is an uncharacterized protein from Staphylococcus carnosus (strain TM300).